A 235-amino-acid polypeptide reads, in one-letter code: Phosphoribosylaminoimidazole-succinocarboxamide synthase (235 aa).

The protein belongs to the SAICAR synthetase family.

It carries out the reaction 5-amino-1-(5-phospho-D-ribosyl)imidazole-4-carboxylate + L-aspartate + ATP = (2S)-2-[5-amino-1-(5-phospho-beta-D-ribosyl)imidazole-4-carboxamido]succinate + ADP + phosphate + 2 H(+). It participates in purine metabolism; IMP biosynthesis via de novo pathway; 5-amino-1-(5-phospho-D-ribosyl)imidazole-4-carboxamide from 5-amino-1-(5-phospho-D-ribosyl)imidazole-4-carboxylate: step 1/2. The sequence is that of Phosphoribosylaminoimidazole-succinocarboxamide synthase from Clostridium beijerinckii (strain ATCC 51743 / NCIMB 8052) (Clostridium acetobutylicum).